The chain runs to 391 residues: Processive diacylglycerol beta-glucosyltransferase (391 aa).

It belongs to the glycosyltransferase 28 family. UgtP subfamily.

It is found in the cell membrane. The catalysed reaction is a 1,2-diacyl-3-O-(beta-D-glucopyranosyl)-sn-glycerol + UDP-alpha-D-glucose = a 1,2-diacyl-3-O-(beta-D-Glc-(1-&gt;6)-beta-D-Glc)-sn-glycerol + UDP + H(+). It catalyses the reaction a 1,2-diacyl-sn-glycerol + UDP-alpha-D-glucose = a 1,2-diacyl-3-O-(beta-D-glucopyranosyl)-sn-glycerol + UDP + H(+). It functions in the pathway glycolipid metabolism; diglucosyl-diacylglycerol biosynthesis. Processive glucosyltransferase involved in the biosynthesis of both the bilayer- and non-bilayer-forming membrane glucolipids. Is able to successively transfer two glucosyl residues to diacylglycerol (DAG), thereby catalyzing the formation of beta-monoglucosyl-DAG (3-O-(beta-D-glucopyranosyl)-1,2-diacyl-sn-glycerol) and beta-diglucosyl-DAG (3-O-(beta-D-glucopyranosyl-beta-(1-&gt;6)-D-glucopyranosyl)-1,2-diacyl-sn-glycerol). Beta-diglucosyl-DAG is the predominant glycolipid found in Bacillales and is also used as a membrane anchor for lipoteichoic acid (LTA). The chain is Processive diacylglycerol beta-glucosyltransferase from Staphylococcus haemolyticus (strain JCSC1435).